The following is a 282-amino-acid chain: MSLVTSLTYVLPHRLLSSLARALAYSKTPATKQWLIDTVTRKFGVDLSEAQEPDPRVYPTFNAFFTRALKPGARVPDADPQALLMPADGRISQLGPIENGRIFQAKGQSFTAAELLGDESAAVPFHNGLFATVYLSPKDYHRVHMPWSGTLRETVHVPGRLFSVGPDAVRNVPRLFARNERLVCHFDTDFGPMASVMVGALLVSGVETVWSGVEIPRYGDRITRKDYRGKGITLERFAEMARFNYGSTVIVLLPPGVAALEGGLAAESSVRLGQALARRQVA.

Catalysis depends on charge relay system; for autoendoproteolytic cleavage activity residues aspartate 88, histidine 144, and serine 247. The active-site Schiff-base intermediate with substrate; via pyruvic acid; for decarboxylase activity is the serine 247. Serine 247 carries the post-translational modification Pyruvic acid (Ser); by autocatalysis.

Belongs to the phosphatidylserine decarboxylase family. PSD-B subfamily. Prokaryotic type I sub-subfamily. Heterodimer of a large membrane-associated beta subunit and a small pyruvoyl-containing alpha subunit. Requires pyruvate as cofactor. In terms of processing, is synthesized initially as an inactive proenzyme. Formation of the active enzyme involves a self-maturation process in which the active site pyruvoyl group is generated from an internal serine residue via an autocatalytic post-translational modification. Two non-identical subunits are generated from the proenzyme in this reaction, and the pyruvate is formed at the N-terminus of the alpha chain, which is derived from the carboxyl end of the proenzyme. The autoendoproteolytic cleavage occurs by a canonical serine protease mechanism, in which the side chain hydroxyl group of the serine supplies its oxygen atom to form the C-terminus of the beta chain, while the remainder of the serine residue undergoes an oxidative deamination to produce ammonia and the pyruvoyl prosthetic group on the alpha chain. During this reaction, the Ser that is part of the protease active site of the proenzyme becomes the pyruvoyl prosthetic group, which constitutes an essential element of the active site of the mature decarboxylase.

The protein localises to the cell membrane. It catalyses the reaction a 1,2-diacyl-sn-glycero-3-phospho-L-serine + H(+) = a 1,2-diacyl-sn-glycero-3-phosphoethanolamine + CO2. It participates in phospholipid metabolism; phosphatidylethanolamine biosynthesis; phosphatidylethanolamine from CDP-diacylglycerol: step 2/2. Catalyzes the formation of phosphatidylethanolamine (PtdEtn) from phosphatidylserine (PtdSer). The protein is Phosphatidylserine decarboxylase proenzyme of Xanthomonas campestris pv. campestris (strain B100).